The following is a 126-amino-acid chain: Small ribosomal subunit protein uS12 (126 aa).

The residue at position 89 (aspartate 89) is a 3-methylthioaspartic acid.

The protein belongs to the universal ribosomal protein uS12 family. Part of the 30S ribosomal subunit. Contacts proteins S8 and S17. May interact with IF1 in the 30S initiation complex.

Functionally, with S4 and S5 plays an important role in translational accuracy. In terms of biological role, interacts with and stabilizes bases of the 16S rRNA that are involved in tRNA selection in the A site and with the mRNA backbone. Located at the interface of the 30S and 50S subunits, it traverses the body of the 30S subunit contacting proteins on the other side and probably holding the rRNA structure together. The combined cluster of proteins S8, S12 and S17 appears to hold together the shoulder and platform of the 30S subunit. This chain is Small ribosomal subunit protein uS12, found in Polynucleobacter asymbioticus (strain DSM 18221 / CIP 109841 / QLW-P1DMWA-1) (Polynucleobacter necessarius subsp. asymbioticus).